Here is a 289-residue protein sequence, read N- to C-terminus: MQSNLLAVLFALASALTIAWGTVVRHRIALRTPKDGSLRSSPLLNALMTPMWWAGMSTAMLAYFLQTVALGFGTLLVVQPVLVLSLMFTLPLSARFNGYRLRRTEIFWATLLTVAVGIMIVLGRPLPGNPHPPLDRWIPVLLVGVAVMGGMWLLAEYVLKKDKALILGLVTGALFGYVAVMSKAAVDLFVHQGITGLILNWEGYGLILTALLGTIVQQYSFNAGELQKSLPAMTIAEPIVAFSLGYLVLGEKFQVVDWEWIAMGIALLVMIVSTIALSRTSTMPAGSKR.

9 helical membrane passes run 4–24 (NLLAVLFALASALTIAWGTVV), 44–64 (LNALMTPMWWAGMSTAMLAYF), 68–88 (VALGFGTLLVVQPVLVLSLMF), 106–126 (IFWATLLTVAVGIMIVLGRPL), 138–158 (IPVLLVGVAVMGGMWLLAEYV), 166–186 (ILGLVTGALFGYVAVMSKAAV), 196–216 (GLILNWEGYGLILTALLGTIV), 230–250 (LPAMTIAEPIVAFSLGYLVLG), and 258–278 (WEWIAMGIALLVMIVSTIALS).

The protein localises to the cell membrane. This is an uncharacterized protein from Corynebacterium glutamicum (strain ATCC 13032 / DSM 20300 / JCM 1318 / BCRC 11384 / CCUG 27702 / LMG 3730 / NBRC 12168 / NCIMB 10025 / NRRL B-2784 / 534).